Here is a 215-residue protein sequence, read N- to C-terminus: Urease accessory protein UreE (215 aa).

The disordered stretch occupies residues 134-215 (FDPEGGAYAP…HGHSHKHDHK (82 aa)). Positions 164–206 (GHHDHADHEHDHKHDHGKHDHAGHDHAHDHHVHDEHCGHDHGH) are enriched in basic and acidic residues.

This sequence belongs to the UreE family.

It localises to the cytoplasm. Functionally, involved in urease metallocenter assembly. Binds nickel. Probably functions as a nickel donor during metallocenter assembly. In Rhodopseudomonas palustris (strain HaA2), this protein is Urease accessory protein UreE.